A 237-amino-acid polypeptide reads, in one-letter code: Large ribosomal subunit protein uL1 (237 aa).

It belongs to the universal ribosomal protein uL1 family. As to quaternary structure, part of the 50S ribosomal subunit.

Binds directly to 23S rRNA. The L1 stalk is quite mobile in the ribosome, and is involved in E site tRNA release. Its function is as follows. Protein L1 is also a translational repressor protein, it controls the translation of the L11 operon by binding to its mRNA. The protein is Large ribosomal subunit protein uL1 of Synechococcus sp. (strain ATCC 27144 / PCC 6301 / SAUG 1402/1) (Anacystis nidulans).